The following is a 335-amino-acid chain: Ubiquinone biosynthesis protein COQ4, mitochondrial (335 aa).

Residues Met-1 to Thr-10 constitute a mitochondrion transit peptide. His-210, Asp-211, His-214, and Glu-226 together coordinate Zn(2+).

It belongs to the COQ4 family. As to quaternary structure, component of a multi-subunit COQ enzyme complex, composed of at least COQ3, COQ4, COQ5, COQ6, COQ7 and COQ9. Interacts with COQ3. It depends on Zn(2+) as a cofactor.

The protein localises to the mitochondrion inner membrane. The enzyme catalyses 4-hydroxy-3-methoxy-5-(all-trans-hexaprenyl)benzoate + H(+) = 2-methoxy-6-(all-trans-hexaprenyl)phenol + CO2. Its pathway is cofactor biosynthesis; ubiquinone biosynthesis. Lyase that catalyzes the C1-decarboxylation of 4-hydroxy-3-methoxy-5-(all-trans-hexaprenyl)benzoic acid into 2-methoxy-6-(all-trans-hexaprenyl)phenol during ubiquinone biosynthesis. May play a role in organizing a multi-subunit COQ enzyme complex required for coenzyme Q biosynthesis. Required for steady-state levels of COQ3, COQ4, COQ6, COQ7 and COQ9 polypeptides. The sequence is that of Ubiquinone biosynthesis protein COQ4, mitochondrial from Saccharomyces cerevisiae (strain ATCC 204508 / S288c) (Baker's yeast).